A 466-amino-acid chain; its full sequence is Muscarinic acetylcholine receptor M2 (466 aa).

The Extracellular segment spans residues 1 to 22 (MNNSTNSSNSGLALTSPYKTFE). N-linked (GlcNAc...) asparagine glycosylation is found at asparagine 2, asparagine 3, and asparagine 6. The chain crosses the membrane as a helical span at residues 23-45 (VVFIVLVAGSLSLVTIIGNILVM). The Cytoplasmic segment spans residues 46–59 (VSIKVNRHLQTVNN). A helical membrane pass occupies residues 60-80 (YFLFSLACADLIIGVFSMNLY). Over 81 to 97 (TLYTVIGYWPLGPVVCD) the chain is Extracellular. Residues cysteine 96 and cysteine 176 are joined by a disulfide bond. Residues 98–119 (LWLALDYVVSNASVMNLLIISF) form a helical membrane-spanning segment. Residues 120–122 (DRY) carry the Important for signaling motif. Topologically, residues 120-139 (DRYFCVTKPLTYPVKRTTKM) are cytoplasmic. A helical transmembrane segment spans residues 140 to 162 (AGMMIAAAWVLSFILWAPAILFW). The Extracellular segment spans residues 163–184 (QFIVGVRTVEDGECYIQFFSNA). A helical membrane pass occupies residues 185-209 (AVTFGTAIAAFYLPVIIMTVLYWHI). Residues 210 to 387 (SRASKSRIKK…PPSREKKVTR (178 aa)) are Cytoplasmic-facing. A disordered region spans residues 218–320 (KKDKKEPVAN…SLGHSKDENS (103 aa)). Serine 232 is subject to Phosphoserine. Over residues 254-270 (ALEHNKIQNGKAPRDAV) the composition is skewed to basic and acidic residues. Composition is skewed to polar residues over residues 284 to 293 (NDSTSVSAVA) and 304 to 313 (DENTVSTSLG). A helical membrane pass occupies residues 388 to 410 (TILAILLAFIITWAPYNVMVLIN). The Extracellular segment spans residues 411 to 418 (TFCAPCIP). Cysteines 413 and 416 form a disulfide. The helical transmembrane segment at 419–442 (NTVWTIGYWLCYINSTINPACYAL) threads the bilayer. Positions 436–440 (NPACY) match the Important for signaling motif. Residues 443 to 466 (CNATFKKTFKHLLMCHYKNIGATR) are Cytoplasmic-facing. 3 positions are modified to phosphothreonine: threonine 446, threonine 450, and threonine 465.

This sequence belongs to the G-protein coupled receptor 1 family. Muscarinic acetylcholine receptor subfamily. CHRM2 sub-subfamily. Interacts with ARRB1 and ARRB2. Interacts with RACK1; the interaction regulates CHRM2 internalization. In terms of processing, phosphorylated in response to agonist treatment.

The protein resides in the cell membrane. It localises to the postsynaptic cell membrane. In terms of biological role, the muscarinic acetylcholine receptor mediates various cellular responses, including inhibition of adenylate cyclase, breakdown of phosphoinositides and modulation of potassium channels through the action of G proteins. Primary transducing effect is adenylate cyclase inhibition. This is Muscarinic acetylcholine receptor M2 (CHRM2) from Sus scrofa (Pig).